The sequence spans 141 residues: Large ribosomal subunit protein uL11 (141 aa).

This sequence belongs to the universal ribosomal protein uL11 family. Part of the ribosomal stalk of the 50S ribosomal subunit. Interacts with L10 and the large rRNA to form the base of the stalk. L10 forms an elongated spine to which L12 dimers bind in a sequential fashion forming a multimeric L10(L12)X complex. Post-translationally, one or more lysine residues are methylated.

Forms part of the ribosomal stalk which helps the ribosome interact with GTP-bound translation factors. This is Large ribosomal subunit protein uL11 from Crocosphaera subtropica (strain ATCC 51142 / BH68) (Cyanothece sp. (strain ATCC 51142)).